Consider the following 394-residue polypeptide: Probable peptidoglycan glycosyltransferase FtsW (394 aa).

Topologically, residues 1 to 27 (MEFLQNIKKNYDEWTRITPQGLLYDRA) are cytoplasmic. The helical transmembrane segment at 28–48 (LFWLFVILLLIGLVAVTSASI) threads the bilayer. The Periplasmic segment spans residues 49-66 (PYSSRLFNDPFYFAKRDA). A helical transmembrane segment spans residues 67–87 (IYVLLSLLTCYISLQISSSQW). Topologically, residues 88–93 (EKWHAK) are cytoplasmic. The chain crosses the membrane as a helical span at residues 94–114 (IFLFSVILLLLVPFIGTSVNG). At 115 to 120 (AKRWIS) the chain is on the periplasmic side. Residues 121–141 (LGILNFQPAEFAKLALTCFLA) traverse the membrane as a helical segment. The Cytoplasmic portion of the chain corresponds to 142–155 (SYFTRRYDEVRSRH). 2 consecutive transmembrane segments (helical) span residues 156–176 (VSIF…LLQP) and 177–197 (DLGS…IVGA). Residue lysine 198 is a topological domain, cytoplasmic. The helical transmembrane segment at 199 to 219 (ILQFVGLIALGGILFVWLVLT) threads the bilayer. The Periplasmic segment spans residues 220–277 (ASYRLKRFIGFLEPFKEPYGTGFQLTNSLIAFGRGEITGEGLGNSIQKLDYLPEAHTD). Residues 278 to 298 (FIMAIIGEEFGFIGILIVILL) form a helical membrane-spanning segment. Residues 299-322 (LGLLIFRAMKIGRESLMLEQRFRG) lie on the Cytoplasmic side of the membrane. The helical transmembrane segment at 323 to 343 (FFALGIGFWIFFQGFVNLGMA) threads the bilayer. At 344–353 (LGMLPTKGLT) the chain is on the periplasmic side. The chain crosses the membrane as a helical span at residues 354–374 (FPLVSYGGSSIIIMSATIGIL). Topologically, residues 375-394 (LRIDHENRLFRIGQARLRDD) are cytoplasmic.

The protein belongs to the SEDS family. FtsW subfamily.

Its subcellular location is the cell inner membrane. It catalyses the reaction [GlcNAc-(1-&gt;4)-Mur2Ac(oyl-L-Ala-gamma-D-Glu-L-Lys-D-Ala-D-Ala)](n)-di-trans,octa-cis-undecaprenyl diphosphate + beta-D-GlcNAc-(1-&gt;4)-Mur2Ac(oyl-L-Ala-gamma-D-Glu-L-Lys-D-Ala-D-Ala)-di-trans,octa-cis-undecaprenyl diphosphate = [GlcNAc-(1-&gt;4)-Mur2Ac(oyl-L-Ala-gamma-D-Glu-L-Lys-D-Ala-D-Ala)](n+1)-di-trans,octa-cis-undecaprenyl diphosphate + di-trans,octa-cis-undecaprenyl diphosphate + H(+). Its pathway is cell wall biogenesis; peptidoglycan biosynthesis. Functionally, peptidoglycan polymerase that is essential for cell division. This is Probable peptidoglycan glycosyltransferase FtsW from Haemophilus influenzae (strain ATCC 51907 / DSM 11121 / KW20 / Rd).